The following is a 435-amino-acid chain: Apparent malate synthase (435 aa).

Mg(2+) is bound by residues Glu159 and Asn180. Glu159 is a binding site for substrate.

The protein belongs to the HpcH/HpaI aldolase family. Mg(2+) is required as a cofactor. The cofactor is Mn(2+). Requires Co(2+) as cofactor. It depends on Ca(2+) as a cofactor.

The enzyme catalyses (S)-malyl-CoA = glyoxylate + acetyl-CoA. It catalyses the reaction (S)-malyl-CoA + H2O = (S)-malate + CoA + H(+). In terms of biological role, involved in the methylaspartate cycle. Catalyzes the biosynthesis of malate in two steps. In the first reaction acetyl-CoA is condensed reversibly with glyoxylate to form (S)-malyl-CoA. In the second reaction (S)-malyl-CoA is hydrolyzed to malate and CoA. It can also catalyze the condensation of propionyl-CoA with glyoxylate and of acetyl-CoA with pyruvate, however the CoA-ester hydrolysis reaction is highly specific for (S)-malyl-CoA. In Haloarcula marismortui (strain ATCC 43049 / DSM 3752 / JCM 8966 / VKM B-1809) (Halobacterium marismortui), this protein is Apparent malate synthase (aceB).